The primary structure comprises 290 residues: 6-carboxyhexanoate--CoA ligase (290 aa).

The protein belongs to the BioW family. As to quaternary structure, homodimer. The cofactor is Mg(2+).

The enzyme catalyses heptanedioate + ATP + CoA = 6-carboxyhexanoyl-CoA + AMP + diphosphate. The protein operates within metabolic intermediate metabolism; pimeloyl-CoA biosynthesis; pimeloyl-CoA from pimelate: step 1/1. Catalyzes the transformation of pimelate into pimeloyl-CoA with concomitant hydrolysis of ATP to AMP. The chain is 6-carboxyhexanoate--CoA ligase from Bacillus amyloliquefaciens (Bacillus velezensis).